The chain runs to 442 residues: tRNA-2-methylthio-N(6)-dimethylallyladenosine synthase (442 aa).

In terms of domain architecture, MTTase N-terminal spans 3–120 (KKLYIETHGC…LPEMIDAARV (118 aa)). Residues C12, C49, C83, C157, C161, and C164 each coordinate [4Fe-4S] cluster. The Radical SAM core domain occupies 143-375 (RVDGPSAYVS…QHRLNQQGFE (233 aa)). One can recognise a TRAM domain in the interval 378–442 (RQMVGSIQRI…PHSLRGSLLQ (65 aa)).

The protein belongs to the methylthiotransferase family. MiaB subfamily. In terms of assembly, monomer. Requires [4Fe-4S] cluster as cofactor.

Its subcellular location is the cytoplasm. It catalyses the reaction N(6)-dimethylallyladenosine(37) in tRNA + (sulfur carrier)-SH + AH2 + 2 S-adenosyl-L-methionine = 2-methylsulfanyl-N(6)-dimethylallyladenosine(37) in tRNA + (sulfur carrier)-H + 5'-deoxyadenosine + L-methionine + A + S-adenosyl-L-homocysteine + 2 H(+). Functionally, catalyzes the methylthiolation of N6-(dimethylallyl)adenosine (i(6)A), leading to the formation of 2-methylthio-N6-(dimethylallyl)adenosine (ms(2)i(6)A) at position 37 in tRNAs that read codons beginning with uridine. The polypeptide is tRNA-2-methylthio-N(6)-dimethylallyladenosine synthase (Pseudomonas syringae pv. syringae (strain B728a)).